The chain runs to 447 residues: GTPase Der (447 aa).

2 EngA-type G domains span residues Q4–E165 and L180–N357. GTP contacts are provided by residues G10 to S17, D57 to L61, N119 to E122, G186 to S193, D233 to L237, and N298 to D301. One can recognise a KH-like domain in the interval K358–K443.

The protein belongs to the TRAFAC class TrmE-Era-EngA-EngB-Septin-like GTPase superfamily. EngA (Der) GTPase family. Associates with the 50S ribosomal subunit.

Its function is as follows. GTPase that plays an essential role in the late steps of ribosome biogenesis. This is GTPase Der from Rickettsia rickettsii (strain Sheila Smith).